A 299-amino-acid polypeptide reads, in one-letter code: DNA repair protein RecO (299 aa).

The interval methionine 1–serine 62 is disordered. Low complexity predominate over residues alanine 25–alanine 41.

This sequence belongs to the RecO family.

Its function is as follows. Involved in DNA repair and RecF pathway recombination. This is DNA repair protein RecO from Paraburkholderia xenovorans (strain LB400).